The primary structure comprises 204 residues: Ribonuclease HII (204 aa).

The RNase H type-2 domain occupies 17–204 (TLIAGVDEVG…KPVKKVLGLL (188 aa)). 3 residues coordinate a divalent metal cation: Asp23, Glu24, and Asp115.

Belongs to the RNase HII family. Requires Mn(2+) as cofactor. The cofactor is Mg(2+).

It is found in the cytoplasm. The enzyme catalyses Endonucleolytic cleavage to 5'-phosphomonoester.. In terms of biological role, endonuclease that specifically degrades the RNA of RNA-DNA hybrids. The protein is Ribonuclease HII of Psychromonas ingrahamii (strain DSM 17664 / CCUG 51855 / 37).